Reading from the N-terminus, the 140-residue chain is Putative pre-16S rRNA nuclease (140 aa).

The protein belongs to the YqgF nuclease family.

It localises to the cytoplasm. Could be a nuclease involved in processing of the 5'-end of pre-16S rRNA. The protein is Putative pre-16S rRNA nuclease of Aeromonas hydrophila subsp. hydrophila (strain ATCC 7966 / DSM 30187 / BCRC 13018 / CCUG 14551 / JCM 1027 / KCTC 2358 / NCIMB 9240 / NCTC 8049).